The chain runs to 206 residues: Small ribosomal subunit protein uS5 (206 aa).

Residues 1 to 15 are compositionally biased toward polar residues; sequence MTDTPTKQETQSNKD. A disordered region spans residues 1–50; sequence MTDTPTKQETQSNKDNVPGAIPVEQKKNNRNDRKRNRRGDSKNLERDSDW. The segment covering 38-50 has biased composition (basic and acidic residues); that stretch reads RGDSKNLERDSDW. The 64-residue stretch at 50–113 folds into the S5 DRBM domain; it reads WQERVVQIRR…SDGKKNLVRV (64 aa).

It belongs to the universal ribosomal protein uS5 family. Part of the 30S ribosomal subunit. Contacts proteins S4 and S8.

In terms of biological role, with S4 and S12 plays an important role in translational accuracy. Functionally, located at the back of the 30S subunit body where it stabilizes the conformation of the head with respect to the body. This chain is Small ribosomal subunit protein uS5, found in Prochlorococcus marinus (strain MIT 9215).